Here is a 515-residue protein sequence, read N- to C-terminus: Probable multifunctional siroheme biosynthesis protein HemA (515 aa).

NAD(+) is bound by residues 26–27 (SL) and 47–48 (IR). The glutamyl-tRNA reductase stretch occupies residues 26-174 (SLDYKSAAID…TAAKKAKTEI (149 aa)). L-glutamyl-tRNA(Glu) contacts are provided by residues 68-71 (TCNR), serine 127, glutamate 132, and glutamine 138. Catalysis depends on cysteine 69, which acts as the Nucleophile. An NADP(+)-binding site is contributed by 206 to 211 (GNGEIG). The segment at 367-507 (FPLFIDLSGK…SLVKSVAEQI (141 aa)) is precorrin-2 dehydrogenase /sirohydrochlorin ferrochelatase.

The protein in the N-terminal section; belongs to the glutamyl-tRNA reductase family. This sequence in the C-terminal section; belongs to the precorrin-2 dehydrogenase / sirohydrochlorin ferrochelatase family. Homodimer.

The enzyme catalyses (S)-4-amino-5-oxopentanoate + tRNA(Glu) + NADP(+) = L-glutamyl-tRNA(Glu) + NADPH + H(+). It carries out the reaction precorrin-2 + NAD(+) = sirohydrochlorin + NADH + 2 H(+). It catalyses the reaction siroheme + 2 H(+) = sirohydrochlorin + Fe(2+). Its pathway is cofactor biosynthesis; adenosylcobalamin biosynthesis; sirohydrochlorin from precorrin-2: step 1/1. The protein operates within porphyrin-containing compound metabolism; siroheme biosynthesis; siroheme from sirohydrochlorin: step 1/1. It participates in porphyrin-containing compound metabolism; siroheme biosynthesis; sirohydrochlorin from precorrin-2: step 1/1. It functions in the pathway porphyrin-containing compound metabolism; protoporphyrin-IX biosynthesis; 5-aminolevulinate from L-glutamyl-tRNA(Glu): step 1/2. Multifunctional enzyme that catalyzes the NADPH-dependent reduction of glutamyl-tRNA(Glu) to glutamate 1-semialdehyde (GSA), the NAD-dependent ring dehydrogenation of precorrin-2 to sirohydrochlorin and finally, the ferrochelation of sirohydrochlorin to yield siroheme. This chain is Probable multifunctional siroheme biosynthesis protein HemA, found in Ruminiclostridium josui (Clostridium josui).